Here is a 291-residue protein sequence, read N- to C-terminus: Taste receptor type 2 member 16 (291 aa).

A topological domain (extracellular) is located at residue M1. The chain crosses the membrane as a helical span at residues 2-22; it reads IPIQLTVFFMIIYVLESLTII. Residues 23–41 are Cytoplasmic-facing; it reads VQSSLIVAVLGREWLQVRR. Residues 42–62 traverse the membrane as a helical segment; the sequence is LMPVDMILISLGISRFCLQWA. Topologically, residues 63-84 are extracellular; the sequence is SMLNNFCSYFNLNYVLCNLTIT. N-linked (GlcNAc...) asparagine glycosylation is present at N80. A helical membrane pass occupies residues 85 to 105; sequence WEFFNILTFWLNSLLTVFYCI. Over 106 to 125 the chain is Cytoplasmic; that stretch reads KVSSFTHHIFLWLRWRILRL. A helical membrane pass occupies residues 126–146; that stretch reads FPWILLGSLMITCVTIIPSAI. Topologically, residues 147–182 are extracellular; sequence GNYIQIQLLTMEHLPRNSTVTDKLENFHQYQFQAHT. N163 carries N-linked (GlcNAc...) asparagine glycosylation. Residues 183 to 203 form a helical membrane-spanning segment; sequence VALVIPFILFLASTIFLMASL. Residues 204-228 lie on the Cytoplasmic side of the membrane; it reads TKQIQHHSTGHCNPSMKARFTALRS. Residues 229–249 traverse the membrane as a helical segment; it reads LAVLFIVFTSYFLTILITIIG. At 250–257 the chain is on the extracellular side; sequence TLFDKRCW. The helical transmembrane segment at 258–278 threads the bilayer; it reads LWVWEAFVYAFILMHSTSLML. The Cytoplasmic segment spans residues 279–291; sequence SSPTLKRILKGKC.

Belongs to the G-protein coupled receptor T2R family. Interacts with RTP3 and RTP4. As to expression, expressed in a subset of gustducin-positive taste receptor cells of the tongue. Expressed in circumvallate papillae and testis.

It is found in the cell membrane. Functionally, gustducin-coupled receptor implicated in the perception of bitter compounds in the oral cavity and the gastrointestinal tract. Signals through PLCB2 and the calcium-regulated cation channel TRPM5. In Homo sapiens (Human), this protein is Taste receptor type 2 member 16 (TAS2R16).